The chain runs to 554 residues: MAYYRNPSDVTAMPAWQALTKHRQAMQDFSMREAFTDDPKRFSQFTLSSAGLFLDYSKNLITAETRDLLVALAGEVGLKDAIKAQYYGELVNSSEGRPALHTALRRPVGDKLKVNGVDVIPDVHRVLNQMTELVGRIHDGLWRGYTEKPITDVVNIGIGGSFLGPELVSEALVAYAHKGVRCHYLANIDGSEFHELSMKIRAETTLFIVSSKSFNTLETLKNAQAARAWYLAQGGSEVELHRHFIAVSSNNAAAVAFGIREENIFPMWDWVGGRYSLWSAIGLPIALAIGMSNFKELLSGAYTMDQHFQSAPFDQNMPVLLALLGVWYGNFWNAQSHAILPYDHYLRNITKHLQQLDMESNGKSVRQDGTPALTDTGPVIWGGVGANGQHAYHQLLHQGTQMIPADFIVPIVSFNPVADHHQWLYANCLSQSQALMMGKTRAEAEAELRDKGMSEEEVQKLAPHKVIPGNRPSNTLVVERISPRRLGALVAMYEHKVFVQSVIWGTNAFDQWGVELGKEMGKAVYQRLTGGTEEPADDASTQGLINYFRGRHRG.

Glutamate 359 acts as the Proton donor in catalysis. Active-site residues include histidine 390 and lysine 518.

It belongs to the GPI family.

The protein localises to the cytoplasm. It carries out the reaction alpha-D-glucose 6-phosphate = beta-D-fructose 6-phosphate. It functions in the pathway carbohydrate biosynthesis; gluconeogenesis. Its pathway is carbohydrate degradation; glycolysis; D-glyceraldehyde 3-phosphate and glycerone phosphate from D-glucose: step 2/4. In terms of biological role, catalyzes the reversible isomerization of glucose-6-phosphate to fructose-6-phosphate. This chain is Glucose-6-phosphate isomerase, found in Pseudomonas syringae pv. tomato (strain ATCC BAA-871 / DC3000).